A 440-amino-acid polypeptide reads, in one-letter code: Putative postmeiotic segregation increased 2-like protein 1 (440 aa).

The span at 164–178 (RVEHNVESSRWEPRR) shows a compositional bias: basic and acidic residues. The tract at residues 164 to 215 (RVEHNVESSRWEPRRRGACGSRGGNFPSPRGGSGVASLERAESSSTEPAKAI) is disordered. The region spanning 230 to 364 (PVVPSLSTAV…MTVSVKQLFS (135 aa)) is the Histidine kinase domain.

This sequence belongs to the DNA mismatch repair MutL/HexB family. In terms of tissue distribution, highly expressed in kidney, spleen, adrenal gland, ovary and cerebellum and to a lower extent in liver, esophagus, stomach, duodenum, colon, bladder, uterus, lung, pancreas and cerebrum. Not expressed in heart.

The chain is Putative postmeiotic segregation increased 2-like protein 1 (PMS2P1) from Homo sapiens (Human).